A 106-amino-acid polypeptide reads, in one-letter code: Large ribosomal subunit protein eL42 (106 aa).

Residues C12, C17, C74, and C77 each contribute to the Zn(2+) site.

It belongs to the eukaryotic ribosomal protein eL42 family. As to quaternary structure, component of the large ribosomal subunit. Mature ribosomes consist of a small (40S) and a large (60S) subunit. The 40S subunit contains about 32 different proteins and 1 molecule of RNA (18S). The 60S subunit contains 45 different proteins and 3 molecules of RNA (25S, 5.8S and 5S). Zn(2+) serves as cofactor.

The protein resides in the cytoplasm. Component of the ribosome, a large ribonucleoprotein complex responsible for the synthesis of proteins in the cell. The small ribosomal subunit (SSU) binds messenger RNAs (mRNAs) and translates the encoded message by selecting cognate aminoacyl-transfer RNA (tRNA) molecules. The large subunit (LSU) contains the ribosomal catalytic site termed the peptidyl transferase center (PTC), which catalyzes the formation of peptide bonds, thereby polymerizing the amino acids delivered by tRNAs into a polypeptide chain. The nascent polypeptides leave the ribosome through a tunnel in the LSU and interact with protein factors that function in enzymatic processing, targeting, and the membrane insertion of nascent chains at the exit of the ribosomal tunnel. This chain is Large ribosomal subunit protein eL42 (RPL44), found in Candida albicans (strain SC5314 / ATCC MYA-2876) (Yeast).